The following is an 802-amino-acid chain: MANTKKTTLDITGMTCAACSNRIEKKLNKLDDVNAQVNLTTEKATVEYNPDQHDVQEFINTIQHLGYGVAVETVELDITGMTCAACSSRIEKVLNKMDGVQNATVNLTTEQAKVDYYPEETDADKLVTRIQKLGYDASIKDNNKDQTSRKAEALQHKLIKLIISAVLSLPLLMLMFVHLFNMHIPALFTNPWFQFILATPVQFIIGWQFYVGAYKNLRNGGANMDVLVAVGTSAAYFYSIYEMVRWLNGSTTQPHLYFETSAVLITLILFGKYLEARAKSQTTNALGELLSLQAKEARILKDGNEVMIPLNEVHVGDTLIVKPGEKIPVDGKIIKGMTAIDESMLTGESIPVEKNVDDTVIGSTMNKNGTITMTATKVGGDTALANIIKVVEEAQSSKAPIQRLADIISGYFVPIVVGIALLTFIVWITLVTPGTFEPALVASISVLVIACPCALGLATPTSIMVGTGRAAENGILFKGGEFVERTHQIDTIVLDKTGTITNGRPVVTDYHGDNQTLQLLATAEKDSEHPLAEAIVNYAKEKQLTLTETTTFKAVPGHGIEATIDHHHILVGNRKLMADNDISLPKHISDDLTYYERDGKTAMLIAVNYSLTGIIAVADTVKDHAKDAIKQLHDMGIEVAMLTGDNKNTAQAIAKQVGIDTVIADILPEEKAAQIAKLQQQGKKVAMVGDGVNDAPALVKADIGIAIGTGTEVAIEAADITILGGDLMLIPKAIYASKATIRNIRQNLFWAFGYNIAGIPIAALGLLAPWVAGAAMALSSVSVVTNALRLKKMRLEPRRKDA.

HMA domains are found at residues 5-70 and 72-138; these read KKTT…YGVA and ETVE…YDAS. Cu(+) contacts are provided by cysteine 16, cysteine 19, cysteine 83, and cysteine 86. Helical transmembrane passes span 161-181, 192-212, 224-244, 256-276, 411-431, and 438-458; these read LIIS…HLFN, WFQF…FYVG, MDVL…YEMV, LYFE…YLEA, YFVP…ITLV, and PALV…LGLA. The 4-aspartylphosphate intermediate role is filled by aspartate 495. Residues aspartate 690 and aspartate 694 each contribute to the Mg(2+) site. 2 helical membrane passes run 748–767 and 771–790; these read LFWA…LGLL and VAGA…ALRL.

Belongs to the cation transport ATPase (P-type) (TC 3.A.3) family. Type IB subfamily.

The protein localises to the cell membrane. It carries out the reaction Cu(+)(in) + ATP + H2O = Cu(+)(out) + ADP + phosphate + H(+). Involved in copper export. This chain is Copper-exporting P-type ATPase (copA), found in Staphylococcus aureus (strain MW2).